Here is a 134-residue protein sequence, read N- to C-terminus: Arsenate reductase (134 aa).

Active-site nucleophile residues include Cys11, Cys83, and Cys90. 2 cysteine pairs are disulfide-bonded: Cys11–Cys83 and Cys83–Cys90.

Belongs to the low molecular weight phosphotyrosine protein phosphatase family. Thioredoxin-coupled ArsC subfamily.

The protein localises to the cytoplasm. The enzyme catalyses arsenate + [thioredoxin]-dithiol + H(+) = arsenite + [thioredoxin]-disulfide + H2O. Functionally, catalyzes the reduction of arsenate [As(V)] to arsenite [As(III)]. The chain is Arsenate reductase from Bacillus cereus (strain ATCC 14579 / DSM 31 / CCUG 7414 / JCM 2152 / NBRC 15305 / NCIMB 9373 / NCTC 2599 / NRRL B-3711).